A 438-amino-acid chain; its full sequence is Phosphoribosylamine--glycine ligase (438 aa).

The region spanning 108 to 316 is the ATP-grasp domain; that stretch reads REFMERNNIP…LLEIAKGIVE (209 aa). 135–194 is an ATP binding site; the sequence is IDEYGKPVVVKPLGLTGGKGVKVVGYQLKDNEEAKEYAEHIIRKDGKVLIEERTDGVEFT. Mg(2+) contacts are provided by Gln274, Glu286, and Asn288. Residues Gln274, Glu286, and Asn288 each contribute to the Mn(2+) site.

It belongs to the GARS family. Mg(2+) is required as a cofactor. Mn(2+) serves as cofactor.

It catalyses the reaction 5-phospho-beta-D-ribosylamine + glycine + ATP = N(1)-(5-phospho-beta-D-ribosyl)glycinamide + ADP + phosphate + H(+). Its pathway is purine metabolism; IMP biosynthesis via de novo pathway; N(1)-(5-phospho-D-ribosyl)glycinamide from 5-phospho-alpha-D-ribose 1-diphosphate: step 2/2. The polypeptide is Phosphoribosylamine--glycine ligase (Pyrococcus horikoshii (strain ATCC 700860 / DSM 12428 / JCM 9974 / NBRC 100139 / OT-3)).